A 691-amino-acid polypeptide reads, in one-letter code: Elongation factor G (691 aa).

The tr-type G domain occupies 8-282; sequence ERVRNIGIAA…AVVDYLPAPI (275 aa). GTP contacts are provided by residues 17-24, 81-85, and 135-138; these read AHIDAGKT, DTPGH, and NKMD.

This sequence belongs to the TRAFAC class translation factor GTPase superfamily. Classic translation factor GTPase family. EF-G/EF-2 subfamily.

It localises to the cytoplasm. In terms of biological role, catalyzes the GTP-dependent ribosomal translocation step during translation elongation. During this step, the ribosome changes from the pre-translocational (PRE) to the post-translocational (POST) state as the newly formed A-site-bound peptidyl-tRNA and P-site-bound deacylated tRNA move to the P and E sites, respectively. Catalyzes the coordinated movement of the two tRNA molecules, the mRNA and conformational changes in the ribosome. The chain is Elongation factor G from Synechococcus sp. (strain WH7803).